A 179-amino-acid chain; its full sequence is MKRERINPDTLELDERVVLINRVSKVVKGGRRFSFSTVVVVGDGKGHVGIGMGKAAEVPDAIRKGAEAAKRNLIRVPLVHSTIPHEIVTKFAATKVMLRPAAPGTGVIAGRGVRPVVEAAGIKDLLSKVYGSNNPVNVVKATFKALSEMTSLQEMARRRDMTPQELNARRMRRETTEAA.

Positions 13-76 (LDERVVLINR…EAAKRNLIRV (64 aa)) constitute an S5 DRBM domain. Residues 160–179 (DMTPQELNARRMRRETTEAA) are disordered.

It belongs to the universal ribosomal protein uS5 family. Part of the 30S ribosomal subunit. Contacts proteins S4 and S8.

With S4 and S12 plays an important role in translational accuracy. Functionally, located at the back of the 30S subunit body where it stabilizes the conformation of the head with respect to the body. The chain is Small ribosomal subunit protein uS5 from Chloroflexus aggregans (strain MD-66 / DSM 9485).